Consider the following 211-residue polypeptide: tRNA (guanine-N(7)-)-methyltransferase (211 aa).

E43, E68, N95, and D117 together coordinate S-adenosyl-L-methionine. The active site involves D117. Substrate is bound by residues K121, D153, and 190–193; that span reads TEYE.

This sequence belongs to the class I-like SAM-binding methyltransferase superfamily. TrmB family.

The catalysed reaction is guanosine(46) in tRNA + S-adenosyl-L-methionine = N(7)-methylguanosine(46) in tRNA + S-adenosyl-L-homocysteine. It participates in tRNA modification; N(7)-methylguanine-tRNA biosynthesis. In terms of biological role, catalyzes the formation of N(7)-methylguanine at position 46 (m7G46) in tRNA. The polypeptide is tRNA (guanine-N(7)-)-methyltransferase (Alkaliphilus oremlandii (strain OhILAs) (Clostridium oremlandii (strain OhILAs))).